The following is a 273-amino-acid chain: Epithelial sodium channel subunit beta (273 aa).

Residues 1-245 (NCYIFNWGQE…RSISESPTTN (245 aa)) lie on the Extracellular side of the membrane. 5 disulfide bridges follow: cysteine 92–cysteine 179, cysteine 117–cysteine 175, cysteine 121–cysteine 171, cysteine 130–cysteine 157, and cysteine 132–cysteine 146. Residues 246-273 (VVWLLSNLGGQFGFWMGGSVLCIIEFGE) form a helical membrane-spanning segment.

Belongs to the amiloride-sensitive sodium channel (TC 1.A.6) family. SCNN1B subfamily. In terms of assembly, component of the heterotrimeric epithelial sodium channel (ENaC) composed of an alpha/SCNN1A, a beta/SCNN1B and a gamma/SCNN1G subunit.

It is found in the apical cell membrane. The protein resides in the cytoplasmic vesicle membrane. It carries out the reaction Na(+)(in) = Na(+)(out). Originally identified and characterized by its inhibition by the diuretic drug amiloride. This is one of the three pore-forming subunits of the heterotrimeric epithelial sodium channel (ENaC), a critical regulator of sodium balance and fluid homeostasis. ENaC operates in epithelial tissues, where it mediates the electrodiffusion of sodium ions from extracellular fluid through the apical membrane of cells, with water following osmotically. It plays a key role in maintaining sodium homeostasis through electrogenic sodium reabsorption in the kidneys. Additionally, ENaC is essential for airway surface liquid homeostasis, which is crucial for proper mucus clearance. In Aquarana catesbeiana (American bullfrog), this protein is Epithelial sodium channel subunit beta.